The sequence spans 208 residues: FMN-dependent NADH:quinone oxidoreductase 1 (208 aa).

An FMN-binding site is contributed by 17 to 19 (SVS).

It belongs to the azoreductase type 1 family. In terms of assembly, homodimer. Requires FMN as cofactor.

The catalysed reaction is 2 a quinone + NADH + H(+) = 2 a 1,4-benzosemiquinone + NAD(+). The enzyme catalyses N,N-dimethyl-1,4-phenylenediamine + anthranilate + 2 NAD(+) = 2-(4-dimethylaminophenyl)diazenylbenzoate + 2 NADH + 2 H(+). Functionally, quinone reductase that provides resistance to thiol-specific stress caused by electrophilic quinones. Its function is as follows. Also exhibits azoreductase activity. Catalyzes the reductive cleavage of the azo bond in aromatic azo compounds to the corresponding amines. This is FMN-dependent NADH:quinone oxidoreductase 1 from Listeria monocytogenes serotype 4b (strain F2365).